Reading from the N-terminus, the 185-residue chain is HTH-type transcriptional regulator SACOL2593 (185 aa).

The 61-residue stretch at Lys6–Phe66 folds into the HTH tetR-type domain. The segment at residues Ser29–Phe48 is a DNA-binding region (H-T-H motif).

The protein is HTH-type transcriptional regulator SACOL2593 of Staphylococcus aureus (strain COL).